The chain runs to 402 residues: O-glucosyltransferase rumi homolog (402 aa).

The first 20 residues, Met-1–Ser-20, serve as a signal peptide directing secretion. Intrachain disulfides connect Cys-67-Cys-74, Cys-72-Cys-375, Cys-118-Cys-124, and Cys-279-Cys-302. A glycan (N-linked (GlcNAc...) asparagine) is linked at Asn-71. The active-site Proton donor/acceptor is the Asp-149. Residues Ala-189–Pro-194 are interaction with the consensus sequence C-X-S-X-[PA]-C in peptide substrates. Residues Arg-226–Thr-230, Arg-234, Val-273–Leu-275, and Ala-291–Arg-295 each bind UDP-alpha-D-glucose.

This sequence belongs to the glycosyltransferase 90 family.

It is found in the endoplasmic reticulum lumen. The protein localises to the secreted. It participates in protein modification; protein glycosylation. Its function is as follows. Protein O-glucosyltransferase. Catalyzes the reaction that attaches glucose through an O-glycosidic linkage to a conserved serine residue found in the consensus sequence C-X-S-X-[PA]-C in epidermal growth factor-like repeats. Regulates Notch signaling by glucosylating Notch in the ER, glucosylation is required for the correct folding and cleavage of Notch. This Aedes aegypti (Yellowfever mosquito) protein is O-glucosyltransferase rumi homolog.